The primary structure comprises 476 residues: Ribulose bisphosphate carboxylase large chain (476 aa).

Substrate-binding residues include Asn-124 and Thr-174. Lys-176 acts as the Proton acceptor in catalysis. Substrate is bound at residue Lys-178. Residues Lys-202, Asp-204, and Glu-205 each contribute to the Mg(2+) site. N6-carboxylysine is present on Lys-202. The Proton acceptor role is filled by His-295. Positions 296, 328, and 380 each coordinate substrate.

Belongs to the RuBisCO large chain family. Type I subfamily. In terms of assembly, heterohexadecamer of 8 large chains and 8 small chains; disulfide-linked. The disulfide link is formed within the large subunit homodimers. Forms complexes of many stoichiometries with Raf1 with and without RbcS. RuBisCO interacts with the C-terminus of CcmM. The cofactor is Mg(2+). The disulfide bond which can form in the large chain dimeric partners within the hexadecamer appears to be associated with oxidative stress and protein turnover.

Its subcellular location is the carboxysome. The enzyme catalyses 2 (2R)-3-phosphoglycerate + 2 H(+) = D-ribulose 1,5-bisphosphate + CO2 + H2O. It catalyses the reaction D-ribulose 1,5-bisphosphate + O2 = 2-phosphoglycolate + (2R)-3-phosphoglycerate + 2 H(+). Functionally, ruBisCO catalyzes two reactions: the carboxylation of D-ribulose 1,5-bisphosphate, the primary event in carbon dioxide fixation, as well as the oxidative fragmentation of the pentose substrate in the photorespiration process. Both reactions occur simultaneously and in competition at the same active site. In Nostoc sp. (strain PCC 7120 / SAG 25.82 / UTEX 2576), this protein is Ribulose bisphosphate carboxylase large chain.